The chain runs to 211 residues: uncharacterized protein (211 aa).

The segment at 1–43 is disordered; it reads MRPEVGREPAALQPRQRPRSDHQLHRSPFTVPPRTPACRSPGP.

This is an uncharacterized protein from Homo sapiens (Human).